Consider the following 218-residue polypeptide: Thiamine-phosphate synthase (218 aa).

Residues 43 to 47 and N75 contribute to the 4-amino-2-methyl-5-(diphosphooxymethyl)pyrimidine site; that span reads QLRDK. D76 and D95 together coordinate Mg(2+). Position 114 (S114) interacts with 4-amino-2-methyl-5-(diphosphooxymethyl)pyrimidine. 141 to 143 lines the 2-[(2R,5Z)-2-carboxy-4-methylthiazol-5(2H)-ylidene]ethyl phosphate pocket; the sequence is TPT. Residue K144 coordinates 4-amino-2-methyl-5-(diphosphooxymethyl)pyrimidine. G172 contacts 2-[(2R,5Z)-2-carboxy-4-methylthiazol-5(2H)-ylidene]ethyl phosphate.

Belongs to the thiamine-phosphate synthase family. Mg(2+) serves as cofactor.

The catalysed reaction is 2-[(2R,5Z)-2-carboxy-4-methylthiazol-5(2H)-ylidene]ethyl phosphate + 4-amino-2-methyl-5-(diphosphooxymethyl)pyrimidine + 2 H(+) = thiamine phosphate + CO2 + diphosphate. It catalyses the reaction 2-(2-carboxy-4-methylthiazol-5-yl)ethyl phosphate + 4-amino-2-methyl-5-(diphosphooxymethyl)pyrimidine + 2 H(+) = thiamine phosphate + CO2 + diphosphate. The enzyme catalyses 4-methyl-5-(2-phosphooxyethyl)-thiazole + 4-amino-2-methyl-5-(diphosphooxymethyl)pyrimidine + H(+) = thiamine phosphate + diphosphate. It functions in the pathway cofactor biosynthesis; thiamine diphosphate biosynthesis; thiamine phosphate from 4-amino-2-methyl-5-diphosphomethylpyrimidine and 4-methyl-5-(2-phosphoethyl)-thiazole: step 1/1. Condenses 4-methyl-5-(beta-hydroxyethyl)thiazole monophosphate (THZ-P) and 2-methyl-4-amino-5-hydroxymethyl pyrimidine pyrophosphate (HMP-PP) to form thiamine monophosphate (TMP). This chain is Thiamine-phosphate synthase, found in Thermobifida fusca (strain YX).